The primary structure comprises 393 residues: Lipid-A-disaccharide synthase (393 aa).

The protein belongs to the LpxB family.

The enzyme catalyses a lipid X + a UDP-2-N,3-O-bis[(3R)-3-hydroxyacyl]-alpha-D-glucosamine = a lipid A disaccharide + UDP + H(+). Its pathway is bacterial outer membrane biogenesis; LPS lipid A biosynthesis. Condensation of UDP-2,3-diacylglucosamine and 2,3-diacylglucosamine-1-phosphate to form lipid A disaccharide, a precursor of lipid A, a phosphorylated glycolipid that anchors the lipopolysaccharide to the outer membrane of the cell. In Granulibacter bethesdensis (strain ATCC BAA-1260 / CGDNIH1), this protein is Lipid-A-disaccharide synthase.